Here is a 346-residue protein sequence, read N- to C-terminus: Protein RecA (346 aa).

67–74 is an ATP binding site; that stretch reads GPESSGKT.

Belongs to the RecA family.

The protein localises to the cytoplasm. In terms of biological role, can catalyze the hydrolysis of ATP in the presence of single-stranded DNA, the ATP-dependent uptake of single-stranded DNA by duplex DNA, and the ATP-dependent hybridization of homologous single-stranded DNAs. It interacts with LexA causing its activation and leading to its autocatalytic cleavage. In Frankia alni (strain DSM 45986 / CECT 9034 / ACN14a), this protein is Protein RecA.